The sequence spans 365 residues: uncharacterized protein (365 aa).

2 disordered regions span residues 218 to 262 and 315 to 342; these read QRPS…AEAA and PRLPEPPVPPDGSGSRMEFRNLSDRTPC. Composition is skewed to basic and acidic residues over residues 239 to 257 and 331 to 341; these read PDNRVQEHREELSQTKDPE and MEFRNLSDRTP.

This is an uncharacterized protein from Mus musculus (Mouse).